A 231-amino-acid chain; its full sequence is Protein PIMREG (231 aa).

Positions 1-44 are disordered; it reads MASQWQGMRTSVRRRSLLKEEQLEKKEVTRSAGGHPETGPLGSL. Phosphoserine occurs at positions 11 and 16. 2 short sequence motifs (D-box) span residues 14 to 17 and 53 to 56; these read RRSL and PLRA. Residues 17 to 29 show a composition bias toward basic and acidic residues; that stretch reads LLKEEQLEKKEVT. Residue S72 is modified to Phosphoserine. 2 disordered regions span residues 115 to 138 and 152 to 197; these read KVRRKRGAQKDRGSPPPSLSQKNT and HLRL…DLEP. A Phosphoserine; by Uhmk1; in vitro modification is found at S128. Positions 178–190 are enriched in polar residues; sequence PCSSTEPLCSPSE. Phosphoserine occurs at positions 191 and 193.

Interacts with PICALM; this interaction may target PICALM to the nucleus. During mitosis, associates with HDAC2 and MTA2 subunits of the chromatin-remodeling NuRD complex; this association is strongest at prometaphase and decreases as the cell progresses through metaphase and anaphase. Ubiquitinated by the anaphase-promoting complex/cyclosome (APC/C) complex in the presence of FZR1, leading to its degradation by the proteasome during mitotic exit. However, degradation is not essential for normal mitotic progression within a single cell cycle. Mainly expressed in thymus and ovary. Expressed in all T-cell subpopulations isolated from the thymus, macrophages, pro-erythrocytes, granulocytes, mast cells and progenitor cells.

Its subcellular location is the nucleus. The protein localises to the nucleolus. Its function is as follows. During mitosis, may play a role in the metaphase-to-anaphase transition. The polypeptide is Protein PIMREG (Mus musculus (Mouse)).